The following is a 257-amino-acid chain: Ribonuclease HII (257 aa).

Positions 72–257 (TYIAGIDEVG…FAPIKDMIQK (186 aa)) constitute an RNase H type-2 domain. A divalent metal cation-binding residues include aspartate 78, glutamate 79, and aspartate 170.

The protein belongs to the RNase HII family. Mn(2+) is required as a cofactor. Mg(2+) serves as cofactor.

It is found in the cytoplasm. The catalysed reaction is Endonucleolytic cleavage to 5'-phosphomonoester.. Its function is as follows. Endonuclease that specifically degrades the RNA of RNA-DNA hybrids. This Bacillus cereus (strain G9842) protein is Ribonuclease HII.